A 417-amino-acid polypeptide reads, in one-letter code: Acid phosphatase (417 aa).

Positions 1-19 are cleaved as a signal peptide; it reads MFTKQSLVTLLGGLSLAVA. N-linked (GlcNAc...) asparagine glycans are attached at residues asparagine 122, asparagine 187, and asparagine 209. Aspartate 216 serves as the catalytic Proton donor. N-linked (GlcNAc...) asparagine glycans are attached at residues asparagine 218, asparagine 333, and asparagine 383.

Post-translationally, the N-terminus is blocked.

The protein localises to the secreted. It carries out the reaction a phosphate monoester + H2O = an alcohol + phosphate. In Aspergillus niger, this protein is Acid phosphatase (phoA).